Consider the following 1300-residue polypeptide: Serine protease EspP (1300 aa).

The first 55 residues, 1-55 (MNKIYSLKYSHITGGLIAVSELSGRVSSRATGKKKHKRILALCFLGLLQSSYSFA), serve as a signal peptide directing secretion. The Peptidase S6 domain occupies 57-311 (QMDISNFYIR…NQTTIDNLKN (255 aa)). Residues histidine 127, aspartate 156, and serine 263 each act as charge relay system in the active site. Residues 1034 to 1300 (DINGEAGAWA…AVNANFRYSF (267 aa)) enclose the Autotransporter domain.

Cleaved to release the mature protein from the outer membrane.

It localises to the periplasm. Its subcellular location is the secreted. The protein resides in the cell surface. It is found in the cell outer membrane. Functionally, serine protease with cytotoxic effect. Disrupts actin cytoskeleton resulting cell detachment in vitro. The chain is Serine protease EspP (espP) from Escherichia coli.